The following is a 3029-amino-acid chain: Polycystin-1-related protein (3029 aa).

A signal peptide spans 1-21 (MAKHLYLAFSLILVPFLVSKA). Residues 22–1685 (KQTSNGEVPW…RDTDKLKNSP (1664 aa)) are Extracellular-facing. The WSC domain maps to 29–121 (VPWLVGCYRY…KNVASVYSTA (93 aa)). PKD domains are found at residues 364–450 (EGHC…IKGV) and 546–634 (DHLF…PECY). The REJ domain maps to 633 to 1476 (CYTRGVAIVG…NPYFSDMNHT (844 aa)). Disordered regions lie at residues 754–773 (RKGP…HPDE), 909–931 (CPSD…SNSP), and 989–1051 (TSAI…PNKP). The span at 918-931 (VTPSTTPMTDSNSP) shows a compositional bias: polar residues. Positions 997–1013 (SGDVDDDEVNNDNDDDS) are enriched in acidic residues. A compositionally biased stretch (polar residues) spans 1020–1047 (TLPTPLSMTNANSVNKPIITTDTPSFNK). The GAIN-B domain maps to 1525–1671 (RNVHVINQTA…GFIQPPNSLH (147 aa)). Disulfide bonds link Cys1624–Cys1651 and Cys1639–Cys1653. A GPS region spans residues 1624–1671 (CFYWNKRGKHWASDGCRLEKSINHTLVCRCNHLTAFSGGFIQPPNSLH). Residues 1686–1706 (LTMVLVISILVMYFLLLGFCV) traverse the membrane as a helical segment. At 1707-1895 (KADRHDKKKL…SYSRFTRAQR (189 aa)) the chain is on the cytoplasmic side. Residues 1733 to 1851 (SRFQLSVQTG…GNGKVECELF (119 aa)) enclose the PLAT domain. Residues 1896–1916 (LSCCLSLLLSFLCVNIAWYRP) traverse the membrane as a helical segment. Topologically, residues 1917 to 1933 (KIEVTEVLGVLDVSANS) are extracellular. The chain crosses the membrane as a helical span at residues 1934–1954 (IMIGVLGSLMVLPVNFLWIFF). Residues 1955 to 2101 (FRYSRRSLSR…YRSKFSLPHG (147 aa)) lie on the Cytoplasmic side of the membrane. A helical membrane pass occupies residues 2102-2122 (FVYVAWFGCLITGTVTSAITI). The Extracellular portion of the chain corresponds to 2123–2140 (WYGLSFGWDLSVHWFQSL). The chain crosses the membrane as a helical span at residues 2141 to 2161 (VFSLLESLLLSQPIMVLAFIF). Residues 2162-2250 (YMSHKTKSGK…SLKNRVLRNY (89 aa)) lie on the Cytoplasmic side of the membrane. The chain crosses the membrane as a helical span at residues 2251 to 2271 (VVELFVFIMFFVVTCALVFSV). The Extracellular segment spans residues 2272–2462 (ADPDVYHLNQ…GYSYFIRFTK (191 aa)). Residues 2463–2483 (LLFVVFFLYLLQHEFFLALKM) form a helical membrane-spanning segment. Topologically, residues 2484 to 2496 (TFSYFTNFWRVYQ) are cytoplasmic. The helical transmembrane segment at 2497–2517 (LLTIAISSACIVSYIHWSLSL) threads the bilayer. Residues 2518-2538 (YALLREVETERQSRVFYLSRQ) lie on the Extracellular side of the membrane. The chain crosses the membrane as a helical span at residues 2539 to 2559 (ISWSQGFLQASYSLLLFLLLI). The Cytoplasmic portion of the chain corresponds to 2560-2586 (RCLHLLRPFRFVRHFGRILSTSISSLL). Residues 2587 to 2607 (ACWVFGFILVVAFAHPGYLLF) traverse the membrane as a helical segment. The Extracellular portion of the chain corresponds to 2608–2651 (GSVHSSFKSFGDAFLLVTSFFRLEGVARYQDFALEEQTLLLSTY). Residues 2652-2672 (FALFLIGFCVIVRGSTAAVVL) traverse the membrane as a helical segment. Over 2673-3029 (HGIRCLGKRR…PVGQRVVSAM (357 aa)) the chain is Cytoplasmic. Residues 2704 to 2726 (KKPKKPRPNSVSDLEETDDEDDL) are disordered. Residues 2716-2726 (DLEETDDEDDL) show a composition bias toward acidic residues.

This sequence belongs to the polycystin family. In terms of assembly, heterodimer of 2 chains generated by proteolytic processing; the large extracellular N-terminal fragment and the membrane-bound C-terminal fragment predominantly remain associated and non-covalently linked. In terms of processing, autoproteolytically processed at the GPS region of the GAIN-B domain; this cleavage modulates receptor activity. As to expression, component of the acid-insoluble and acid-soluble organic matrix of the aragonitic skeleton (at protein level).

The protein localises to the membrane. The polypeptide is Polycystin-1-related protein (Acropora millepora (Staghorn coral)).